The primary structure comprises 184 residues: NADH-quinone oxidoreductase subunit B (184 aa).

4 residues coordinate [4Fe-4S] cluster: Cys-63, Cys-64, Cys-128, and Cys-158.

The protein belongs to the complex I 20 kDa subunit family. NDH-1 is composed of 14 different subunits. Subunits NuoB, C, D, E, F, and G constitute the peripheral sector of the complex. [4Fe-4S] cluster is required as a cofactor.

The protein resides in the cell inner membrane. The catalysed reaction is a quinone + NADH + 5 H(+)(in) = a quinol + NAD(+) + 4 H(+)(out). Its function is as follows. NDH-1 shuttles electrons from NADH, via FMN and iron-sulfur (Fe-S) centers, to quinones in the respiratory chain. The immediate electron acceptor for the enzyme in this species is believed to be ubiquinone. Couples the redox reaction to proton translocation (for every two electrons transferred, four hydrogen ions are translocated across the cytoplasmic membrane), and thus conserves the redox energy in a proton gradient. In Xanthomonas oryzae pv. oryzae (strain MAFF 311018), this protein is NADH-quinone oxidoreductase subunit B.